The following is a 309-amino-acid chain: Peptidyl-prolyl cis-trans isomerase 9 (309 aa).

Residues 8 to 173 (FLDISVDENL…AKVLISNCGE (166 aa)) enclose the PPIase cyclophilin-type domain. 4 stretches are compositionally biased toward basic and acidic residues: residues 217 to 229 (NEKK…DKRR), 239 to 265 (RSHE…RDEN), 280 to 289 (ERSATPEHWR), and 296 to 309 (WVHD…EDLV). A disordered region spans residues 217–309 (NEKKHEMRND…SHKHPEEDLV (93 aa)).

This sequence belongs to the cyclophilin-type PPIase family. Co-expressed with pdi-1 in the syncytial hypodermis.

The enzyme catalyses [protein]-peptidylproline (omega=180) = [protein]-peptidylproline (omega=0). PPIases accelerate the folding of proteins. It catalyzes the cis-trans isomerization of proline imidic peptide bonds in oligopeptides. Thought to function as a catalyst in the folding and modification of cuticle collagens. The sequence is that of Peptidyl-prolyl cis-trans isomerase 9 (cyn-9) from Caenorhabditis elegans.